A 195-amino-acid chain; its full sequence is dTTP/UTP pyrophosphatase (195 aa).

The active-site Proton acceptor is D70.

Belongs to the Maf family. YhdE subfamily. A divalent metal cation serves as cofactor.

Its subcellular location is the cytoplasm. The catalysed reaction is dTTP + H2O = dTMP + diphosphate + H(+). The enzyme catalyses UTP + H2O = UMP + diphosphate + H(+). Its function is as follows. Nucleoside triphosphate pyrophosphatase that hydrolyzes dTTP and UTP. May have a dual role in cell division arrest and in preventing the incorporation of modified nucleotides into cellular nucleic acids. The protein is dTTP/UTP pyrophosphatase of Methanococcoides burtonii (strain DSM 6242 / NBRC 107633 / OCM 468 / ACE-M).